The chain runs to 176 residues: Ribosome maturation factor RimM (176 aa).

Positions 97–176 (EDDFYWRDLI…QICVDWDPGF (80 aa)) constitute a PRC barrel domain.

Belongs to the RimM family. In terms of assembly, binds ribosomal protein uS19.

It is found in the cytoplasm. An accessory protein needed during the final step in the assembly of 30S ribosomal subunit, possibly for assembly of the head region. Essential for efficient processing of 16S rRNA. May be needed both before and after RbfA during the maturation of 16S rRNA. It has affinity for free ribosomal 30S subunits but not for 70S ribosomes. This is Ribosome maturation factor RimM from Colwellia psychrerythraea (strain 34H / ATCC BAA-681) (Vibrio psychroerythus).